We begin with the raw amino-acid sequence, 161 residues long: Cyclic pyranopterin monophosphate synthase (161 aa).

Residues 75 to 77 (LCH) and 113 to 114 (ME) each bind substrate. Asp-128 is an active-site residue.

This sequence belongs to the MoaC family. Homohexamer; trimer of dimers.

It catalyses the reaction (8S)-3',8-cyclo-7,8-dihydroguanosine 5'-triphosphate = cyclic pyranopterin phosphate + diphosphate. The protein operates within cofactor biosynthesis; molybdopterin biosynthesis. Its function is as follows. Catalyzes the conversion of (8S)-3',8-cyclo-7,8-dihydroguanosine 5'-triphosphate to cyclic pyranopterin monophosphate (cPMP). In Citrobacter koseri (strain ATCC BAA-895 / CDC 4225-83 / SGSC4696), this protein is Cyclic pyranopterin monophosphate synthase.